A 418-amino-acid polypeptide reads, in one-letter code: Serine hydroxymethyltransferase (418 aa).

(6S)-5,6,7,8-tetrahydrofolate-binding positions include leucine 121 and 125–127 (GHL). Lysine 230 is subject to N6-(pyridoxal phosphate)lysine. Residues glutamate 246 and 355–357 (SPF) contribute to the (6S)-5,6,7,8-tetrahydrofolate site.

Belongs to the SHMT family. In terms of assembly, homodimer. The cofactor is pyridoxal 5'-phosphate.

The protein localises to the cytoplasm. It carries out the reaction (6R)-5,10-methylene-5,6,7,8-tetrahydrofolate + glycine + H2O = (6S)-5,6,7,8-tetrahydrofolate + L-serine. The protein operates within one-carbon metabolism; tetrahydrofolate interconversion. Its pathway is amino-acid biosynthesis; glycine biosynthesis; glycine from L-serine: step 1/1. Its function is as follows. Catalyzes the reversible interconversion of serine and glycine with tetrahydrofolate (THF) serving as the one-carbon carrier. This reaction serves as the major source of one-carbon groups required for the biosynthesis of purines, thymidylate, methionine, and other important biomolecules. Also exhibits THF-independent aldolase activity toward beta-hydroxyamino acids, producing glycine and aldehydes, via a retro-aldol mechanism. In Streptococcus pneumoniae (strain ATCC 700669 / Spain 23F-1), this protein is Serine hydroxymethyltransferase.